The chain runs to 256 residues: Phosphonates import ATP-binding protein PhnC (256 aa).

The 245-residue stretch at L3–V247 folds into the ABC transporter domain. Residue G36 to S43 coordinates ATP.

It belongs to the ABC transporter superfamily. Phosphonates importer (TC 3.A.1.9.1) family. In terms of assembly, the complex is composed of two ATP-binding proteins (PhnC), two transmembrane proteins (PhnE) and a solute-binding protein (PhnD).

It is found in the cell inner membrane. It carries out the reaction phosphonate(out) + ATP + H2O = phosphonate(in) + ADP + phosphate + H(+). Its function is as follows. Part of the ABC transporter complex PhnCDE involved in phosphonates import. Responsible for energy coupling to the transport system. This is Phosphonates import ATP-binding protein PhnC from Treponema denticola (strain ATCC 35405 / DSM 14222 / CIP 103919 / JCM 8153 / KCTC 15104).